A 103-amino-acid chain; its full sequence is Large ribosomal subunit protein bL21 (103 aa).

The protein belongs to the bacterial ribosomal protein bL21 family. Part of the 50S ribosomal subunit. Contacts protein L20.

Its function is as follows. This protein binds to 23S rRNA in the presence of protein L20. The chain is Large ribosomal subunit protein bL21 from Polynucleobacter asymbioticus (strain DSM 18221 / CIP 109841 / QLW-P1DMWA-1) (Polynucleobacter necessarius subsp. asymbioticus).